Consider the following 1371-residue polypeptide: Perilipin-4 (1371 aa).

The span at 1-13 (MSAPDEGRRDPPK) shows a compositional bias: basic and acidic residues. The interval 1–22 (MSAPDEGRRDPPKPKGKTLGSF) is disordered. Phosphoserine is present on residues Ser-25 and Ser-31. The segment at 37–86 (ANAHSSARARPAADPTGAPAAEAAQPQAQVAAHPEQTAPWTEKELQPSEK) is disordered. Over residues 44 to 72 (RARPAADPTGAPAAEAAQPQAQVAAHPEQ) the composition is skewed to low complexity. 27 tandem repeats follow at residues 109-141 (GVASVVDVAKGVVQGGLDTTRSALTGTKEVVSS), 142-174 (GVTGAMDMAKGAVQGGLDTSKAVLTGTKDTVST), 175-207 (GLTGAVNVAKGTVQAGVDTTKTVLTGTKDTVTT), 208-240 (GVMGAVNLAKGTVQTGVETSKAVLTGTKDAVST), 241-273 (GLTGAVNVARGSIQTGVDTSKTVLTGTKDTVCS), 274-306 (GVTGAMNVAKGTIQTGVDTSKTVLTGTKDTVCS), 307-339 (GVTGAMNVAKGTIQTGVDTSKTVLTGTKDTVCS), 340-372 (GVTGAMNVAKGTIQTGVDTTKTVLTGTKNTVCS), 373-405 (GVTGAVNLAKEAIQGGLDTTKSMVMGTKDTMST), 406-438 (GLTGAANVAKGAMQTGLNTTQNIATGTKDTVCS), 439-471 (GVTGAMNLARGTIQTGVDTTKIVLTGTKDTVCS), 472-504 (GVTGAANVAKGAVQGGLDTTKSVLTGTKDAVST), 505-537 (GLTGAVNVAKGTVQTGVDTTKTVLTGTKDTVCS), 538-570 (GVTSAVNVAKGAVQGGLDTTKSVVIGTKDTMST), 571-603 (GLTGAANVAKGAVQTGVDTAKTVLTGTKDTVTT), 604-636 (GLVGAVNVAKGTVQTGMDTTKTVLTGTKDTIYS), 637-669 (GVTSAVNVAKGAVQTGLKTTQNIATGTKNTFGS), 670-702 (GVTSAVNVAKGAAQTGVDTAKTVLTGTKDTVTT), 703-735 (GLMGAVNVAKGTVQTSVDTTKTVLTGTKDTVCS), 736-768 (GVTGAANVAKGAIQGGLDTTKSVLTGTKDAVST), 769-801 (GLTGAVKLAKGTVQTGMDTTKTVLTGTKDAVCS), 802-834 (GVTGAANVAKGAVQMGVDTAKTVLTGTKDTVCS), 835-867 (GVTGAANVAKGAVQTGLKTTQNIATGTKNTLGS), 868-900 (GVTGAAKVAKGAVQGGLDTTKSVLTGTKDAVST), 901-933 (GLTGAVNLAKGTVQTGVDTSKTVLTGTKDTVCS), 934-966 (GVTGAVNVAKGTVQTGVDTAKTVLSGAKDAVTT), and 967-999 (GVTGAVNVAKGTVQTGVDASKAVLMGTKDTVFS). The tract at residues 109 to 999 (GVASVVDVAK…LMGTKDTVFS (891 aa)) is 27 X 33 AA approximate tandem repeat. A compositionally biased stretch (polar residues) spans 1060-1083 (PATSWGGLTSSRTTDNGGEQTALS). Disordered regions lie at residues 1060–1093 (PATSWGGLTSSRTTDNGGEQTALSPQEAPFSGIS) and 1240–1260 (QAPEGQPRLDQGSGASAEDAA).

This sequence belongs to the perilipin family.

The protein localises to the cell membrane. Its subcellular location is the cytoplasm. It is found in the lipid droplet. Its function is as follows. May play a role in triacylglycerol packaging into adipocytes. May function as a coat protein involved in the biogenesis of lipid droplets. This Homo sapiens (Human) protein is Perilipin-4.